A 35-amino-acid chain; its full sequence is Alpha-amanitin proprotein 1 (35 aa).

Positions methionine 1–proline 10 are excised as a propeptide. Isoleucine 11 is modified ((3R,4R)-4,5-dihydroxyisoleucine; in form alpha-amanitin). Residue isoleucine 11 is modified to (3R,4S)-4-hydroxyisoleucine; in form gamma-amanitin. The cyclopeptide (Ile-Pro) cross-link spans isoleucine 11–proline 18. Positions tryptophan 12–cysteine 16 form a cross-link, 2'-cysteinyl-6'-hydroxytryptophan sulfoxide (Trp-Cys). Proline 18 carries the 4-hydroxyproline modification. A propeptide spanning residues tryptophan 19–cysteine 35 is cleaved from the precursor.

This sequence belongs to the MSDIN fungal toxin family. Post-translationally, processed by the macrocyclase-peptidase enzyme POPB to yield a toxic bicyclic octapeptide. POPB first removes 10 residues from the N-terminus. Conformational trapping of the remaining peptide forces the enzyme to release this intermediate rather than proceed to macrocyclization. The enzyme rebinds the remaining peptide in a different conformation and catalyzes macrocyclization of the N-terminal 8 residues.

Functionally, major toxin belonging to the bicyclic octapeptides amatoxins that acts by binding non-competitively to RNA polymerase II and greatly slowing the elongation of transcripts from target promoters. The sequence is that of Alpha-amanitin proprotein 1 from Galerina marginata (strain CBS 339.88).